Here is a 659-residue protein sequence, read N- to C-terminus: Exoribonuclease 2 (659 aa).

Residues Arg189 to Ala531 enclose the RNB domain. One can recognise an S1 motif domain in the interval Lys576–Val658.

This sequence belongs to the RNR ribonuclease family. RNase II subfamily.

The protein resides in the cytoplasm. It carries out the reaction Exonucleolytic cleavage in the 3'- to 5'-direction to yield nucleoside 5'-phosphates.. Its function is as follows. Involved in mRNA degradation. Hydrolyzes single-stranded polyribonucleotides processively in the 3' to 5' direction. In Actinobacillus succinogenes (strain ATCC 55618 / DSM 22257 / CCUG 43843 / 130Z), this protein is Exoribonuclease 2.